The primary structure comprises 429 residues: Glutamate-1-semialdehyde 2,1-aminomutase (429 aa).

An N6-(pyridoxal phosphate)lysine modification is found at K267.

Belongs to the class-III pyridoxal-phosphate-dependent aminotransferase family. HemL subfamily. In terms of assembly, homodimer. Pyridoxal 5'-phosphate is required as a cofactor.

It is found in the cytoplasm. It catalyses the reaction (S)-4-amino-5-oxopentanoate = 5-aminolevulinate. The protein operates within porphyrin-containing compound metabolism; protoporphyrin-IX biosynthesis; 5-aminolevulinate from L-glutamyl-tRNA(Glu): step 2/2. The sequence is that of Glutamate-1-semialdehyde 2,1-aminomutase from Stenotrophomonas maltophilia (strain K279a).